The sequence spans 433 residues: Transcobalamin-1 (433 aa).

The signal sequence occupies residues 1 to 23; it reads MRQSHQLPLVGLLLFSFIPSQLC. The globular N-terminal alpha domain stretch occupies residues 24–310; that stretch reads EICEVSEENY…DINKDSSCVS (287 aa). 3 disulfides stabilise this stretch: Cys-26-Cys-265, Cys-105-Cys-308, and Cys-155-Cys-197. 142-146 provides a ligand contact to cyanocob(III)alamin; the sequence is TNYYQ. Asn-160 carries N-linked (GlcNAc...) asparagine glycosylation. Cyanocob(III)alamin is bound at residue Asp-186. Residue Asn-216 is glycosylated (N-linked (GlcNAc...) asparagine). Residues Asn-240 and Gln-289 each coordinate cyanocob(III)alamin. Positions 311–332 are flexible linker; it reads ASGNFNISADEPITVTPPDSQS. Residues Asn-316, Asn-337, Asn-343, Asn-349, Asn-354, and Asn-369 are each glycosylated (N-linked (GlcNAc...) asparagine). The segment at 333-433 is globular C-terminal beta domain; the sequence is YISVNYSVRI…ENLEVRWSKY (101 aa). 385–386 is a cyanocob(III)alamin binding site; that stretch reads YI. Cys-388 and Cys-393 form a disulfide bridge. Residues 402-404, Leu-411, and Tyr-433 each bind cyanocob(III)alamin; that span reads WEL.

This sequence belongs to the eukaryotic cobalamin transport proteins family. Post-translationally, contains about 30% carbohydrates. As to expression, produced by the salivary glands of the oral cavity, in response to ingestion of food. Major constituent of secondary granules in neutrophils.

It localises to the secreted. Functionally, binds vitamin B12 with femtomolar affinity and protects it from the acidic environment of the stomach. The protein is Transcobalamin-1 (TCN1) of Homo sapiens (Human).